The chain runs to 439 residues: Omega-aminotransferase (439 aa).

112 to 113 contributes to the pyridoxal 5'-phosphate binding site; sequence GS. Residue K281 is modified to N6-(pyridoxal phosphate)lysine. Residue T318 participates in pyridoxal 5'-phosphate binding.

Belongs to the class-III pyridoxal-phosphate-dependent aminotransferase family. In terms of assembly, homotetramer. Requires pyridoxal 5'-phosphate as cofactor.

The catalysed reaction is 3-oxopropanoate + L-alanine = beta-alanine + pyruvate. It catalyses the reaction 3-aminobutanoate + pyruvate = acetoacetate + L-alanine. It carries out the reaction benzylamine + pyruvate = benzaldehyde + L-alanine. The enzyme catalyses (S)-1-phenylethylamine + pyruvate = acetophenone + L-alanine. The catalysed reaction is 2-phenylethylamine + pyruvate = 2-phenylacetaldehyde + L-alanine. It catalyses the reaction 1-phenylpropylamine + pyruvate = 1-phenylpropan-1-one + L-alanine. It carries out the reaction 3-phenylpropylamine + pyruvate = 3-phenylpropanal + L-alanine. Functionally, aminotransferase that can use beta-amino acids, aliphatic amines, or aromatic amines as amino donors, and pyruvate as amino acceptor. Shows high activity for short-chain beta-amino acids, with the highest activity for 3-aminobutanoate and beta-alanine in vitro. Displays higher activity toward aromatic amines than aliphatic amines. May be involved in beta-alanine biosynthesis and/or degradation. The sequence is that of Omega-aminotransferase from Caulobacter vibrioides (strain ATCC 19089 / CIP 103742 / CB 15) (Caulobacter crescentus).